The chain runs to 445 residues: Mitochondrial-processing peptidase subunit alpha-2 (445 aa).

Residues 1–13 (MIGRFIARNYTTS) constitute a mitochondrion transit peptide.

This sequence belongs to the peptidase M16 family. In terms of assembly, heterodimer of alpha and beta subunits, forming the mitochondrial processing protease (MPP) in which subunit alpha is involved in substrate recognition and binding and subunit beta is the catalytic subunit.

It is found in the mitochondrion matrix. Functionally, substrate recognition and binding subunit of the essential mitochondrial processing protease (MPP), which cleaves the mitochondrial sequence off newly imported precursors proteins. This chain is Mitochondrial-processing peptidase subunit alpha-2 (mppA2), found in Dictyostelium discoideum (Social amoeba).